The chain runs to 241 residues: SURF1-like protein (241 aa).

A run of 2 helical transmembrane segments spans residues 5-25 and 199-219; these read LTVL…LNRL and LEYA…YRIY.

Belongs to the SURF1 family.

The protein resides in the cell membrane. This chain is SURF1-like protein, found in Rickettsia bellii (strain RML369-C).